Consider the following 1424-residue polypeptide: ABC multidrug transporter H (1424 aa).

The disordered stretch occupies residues 1–49 (MEDQGHLPSEPRALFDRRDDTDSTNTALDETDLSRTPLQDTSHTPHAED). Positions 23–42 (STNTALDETDLSRTPLQDTS) are enriched in polar residues. 2 N-linked (GlcNAc...) asparagine glycosylation sites follow: Asn79 and Asn275. One can recognise an ABC transporter 1 domain in the interval 96–351 (LSQFNIPQHI…MEEQGFVCRE (256 aa)). 7 helical membrane-spanning segments follow: residues 488–508 (GLFIKSGALFFSLLYNSLLAM), 520–540 (VLIKHKYFAFFHPAAFCIAQI), 544–564 (IPVLLFQISMFAVVVYFMVGL), 569–589 (GAFFSYWIIIFVATMVMTALF), 605–625 (VSGFLISALIMYCGYLEPYHA), 629–649 (WFIWIYWINPLAYAFDALLSI), and 710–730 (NFGILWAWWALFVAVTIIATS). Residues 760 to 782 (EEAQLNEKAGHKGTGTDSEAQSN) are disordered. Residues Asn790 and Asn798 are each glycosylated (N-linked (GlcNAc...) asparagine). The ABC transporter 2 domain maps to 794 to 1037 (FTWKNLTYTV…VKDYFARYGA (244 aa)). 830 to 837 (GSSGAGKT) contacts ATP. A run of 4 helical transmembrane segments spans residues 1131–1151 (IALHIGSALFNGFSFWMIGDS), 1161–1181 (TIFNFIFVAPGVINQLQPLFI), 1200–1220 (VAFVTALIVSEFPYLCVCAVL), and 1240–1260 (AIFFIMLCYEFLYTGIGQFIA). The N-linked (GlcNAc...) asparagine glycan is linked to Asn1265. 2 helical membrane-spanning segments follow: residues 1268-1288 (FAALTNPLILGTLVSFCGVLV) and 1300-1320 (WIYWLNPFNYLMGSMLVFSVF). Asn1338 is a glycosylation site (N-linked (GlcNAc...) asparagine). A helical transmembrane segment spans residues 1395-1415 (TAIVCIFVLSSYALVYALMKL).

The protein belongs to the ABC transporter superfamily. ABCG family. PDR (TC 3.A.1.205) subfamily.

It is found in the cell membrane. With respect to regulation, the efflux inhibitor FK506 impairs the transport activity. ABC efflux transporter that is able to transport rhodamine 6G (R-6G), a known substrate for many ABC transporters, but seems not to transport azoles. This is ABC multidrug transporter H from Aspergillus fumigatus (strain ATCC MYA-4609 / CBS 101355 / FGSC A1100 / Af293) (Neosartorya fumigata).